The following is a 156-amino-acid chain: Transcription elongation factor GreA (156 aa).

Residues 46-73 are a coiled coil; the sequence is AEYHAAREKQSFIEGRIKELEALLSLAE.

The protein belongs to the GreA/GreB family.

In terms of biological role, necessary for efficient RNA polymerase transcription elongation past template-encoded arresting sites. The arresting sites in DNA have the property of trapping a certain fraction of elongating RNA polymerases that pass through, resulting in locked ternary complexes. Cleavage of the nascent transcript by cleavage factors such as GreA or GreB allows the resumption of elongation from the new 3'terminus. GreA releases sequences of 2 to 3 nucleotides. This Cereibacter sphaeroides (strain ATCC 17025 / ATH 2.4.3) (Rhodobacter sphaeroides) protein is Transcription elongation factor GreA.